The sequence spans 118 residues: Large ribosomal subunit protein bL19 (118 aa).

The protein belongs to the bacterial ribosomal protein bL19 family.

Functionally, this protein is located at the 30S-50S ribosomal subunit interface and may play a role in the structure and function of the aminoacyl-tRNA binding site. This Onion yellows phytoplasma (strain OY-M) protein is Large ribosomal subunit protein bL19.